We begin with the raw amino-acid sequence, 476 residues long: Aspartyl/glutamyl-tRNA(Asn/Gln) amidotransferase subunit B (476 aa).

The protein belongs to the GatB/GatE family. GatB subfamily. As to quaternary structure, heterotrimer of A, B and C subunits.

The catalysed reaction is L-glutamyl-tRNA(Gln) + L-glutamine + ATP + H2O = L-glutaminyl-tRNA(Gln) + L-glutamate + ADP + phosphate + H(+). The enzyme catalyses L-aspartyl-tRNA(Asn) + L-glutamine + ATP + H2O = L-asparaginyl-tRNA(Asn) + L-glutamate + ADP + phosphate + 2 H(+). Functionally, allows the formation of correctly charged Asn-tRNA(Asn) or Gln-tRNA(Gln) through the transamidation of misacylated Asp-tRNA(Asn) or Glu-tRNA(Gln) in organisms which lack either or both of asparaginyl-tRNA or glutaminyl-tRNA synthetases. The reaction takes place in the presence of glutamine and ATP through an activated phospho-Asp-tRNA(Asn) or phospho-Glu-tRNA(Gln). The sequence is that of Aspartyl/glutamyl-tRNA(Asn/Gln) amidotransferase subunit B from Listeria monocytogenes serotype 4b (strain CLIP80459).